A 128-amino-acid chain; its full sequence is Photosystem II reaction center Psb28 protein (128 aa).

Residues 109-128 (SGLGYSQDSGEAPASDSSNG) are disordered. Residues 111–128 (LGYSQDSGEAPASDSSNG) show a composition bias toward polar residues.

The protein belongs to the Psb28 family. Part of the photosystem II complex.

The protein resides in the cellular thylakoid membrane. This chain is Photosystem II reaction center Psb28 protein, found in Synechococcus sp. (strain CC9311).